Consider the following 299-residue polypeptide: Very long chain fatty acid elongase 5 (299 aa).

N-acetylmethionine is present on Met1. A run of 7 helical transmembrane segments spans residues 26-46 (WFLL…LLIV), 64-84 (ILVV…CELV), 112-132 (VLWW…FFIL), 150-170 (MLNI…YFGA), 172-192 (LNSF…VLSM), 205-225 (GQLL…IWPC), and 226-246 (TFPL…IALF). Residues 262-299 (RKDHLKDHQNGSKAAVNGHTNSFSPLENNVKPRKLRKD) are disordered. The segment covering 279-288 (GHTNSFSPLE) has biased composition (polar residues). Ser285 carries the post-translational modification Phosphoserine.

The protein belongs to the ELO family. ELOVL5 subfamily. In terms of assembly, interacts with TECR.

Its subcellular location is the endoplasmic reticulum membrane. The protein resides in the cell projection. The protein localises to the dendrite. The enzyme catalyses a very-long-chain acyl-CoA + malonyl-CoA + H(+) = a very-long-chain 3-oxoacyl-CoA + CO2 + CoA. The catalysed reaction is (6Z,9Z,12Z)-octadecatrienoyl-CoA + malonyl-CoA + H(+) = (8Z,11Z,14Z)-3-oxoeicosatrienoyl-CoA + CO2 + CoA. It catalyses the reaction (9Z,12Z,15Z)-octadecatrienoyl-CoA + malonyl-CoA + H(+) = (11Z,14Z,17Z)-3-oxoeicosatrienoyl-CoA + CO2 + CoA. It carries out the reaction (9Z)-hexadecenoyl-CoA + malonyl-CoA + H(+) = 3-oxo-(11Z)-octadecenoyl-CoA + CO2 + CoA. The enzyme catalyses (9Z)-octadecenoyl-CoA + malonyl-CoA + H(+) = 3-oxo-(11Z)-eicosenoyl-CoA + CO2 + CoA. The catalysed reaction is (11Z)-octadecenoyl-CoA + malonyl-CoA + H(+) = 3-oxo-(13Z)-eicosenoyl-CoA + CO2 + CoA. It catalyses the reaction (9Z,12Z)-octadecadienoyl-CoA + malonyl-CoA + H(+) = (11Z,14Z)-3-oxoicosa-11,14-dienoyl-CoA + CO2 + CoA. It carries out the reaction (6Z,9Z,12Z,15Z)-octadecatetraenoyl-CoA + malonyl-CoA + H(+) = (8Z,11Z,14Z,17Z)-3-oxoicosatetraenoyl-CoA + CO2 + CoA. The enzyme catalyses (5Z,8Z,11Z,14Z)-eicosatetraenoyl-CoA + malonyl-CoA + H(+) = (7Z,10Z,13Z,16Z)-3-oxodocosatetraenoyl-CoA + CO2 + CoA. The catalysed reaction is (5Z,8Z,11Z,14Z,17Z)-eicosapentaenoyl-CoA + malonyl-CoA + H(+) = 3-oxo-(7Z,10Z,13Z,16Z,19Z)-docosapentaenoyl-CoA + CO2 + CoA. The protein operates within lipid metabolism; polyunsaturated fatty acid biosynthesis. Catalyzes the first and rate-limiting reaction of the four reactions that constitute the long-chain fatty acids elongation cycle. This endoplasmic reticulum-bound enzymatic process allows the addition of 2 carbons to the chain of long- and very long-chain fatty acids (VLCFAs) per cycle. Condensing enzyme that acts specifically toward polyunsaturated acyl-CoA with the higher activity toward C18:3(n-6) acyl-CoA. May participate in the production of monounsaturated and of polyunsaturated VLCFAs of different chain lengths that are involved in multiple biological processes as precursors of membrane lipids and lipid mediators. In conditions where the essential linoleic and alpha linoleic fatty acids are lacking it is also involved in the synthesis of Mead acid from oleic acid. The sequence is that of Very long chain fatty acid elongase 5 from Pongo abelii (Sumatran orangutan).